The following is a 291-amino-acid chain: Pyridoxal 5'-phosphate synthase subunit PdxS (291 aa).

Asp-23 is a D-ribose 5-phosphate binding site. The active-site Schiff-base intermediate with D-ribose 5-phosphate is Lys-80. D-ribose 5-phosphate is bound at residue Gly-152. Residue Arg-164 participates in D-glyceraldehyde 3-phosphate binding. Residues Gly-213 and 234–235 (GS) each bind D-ribose 5-phosphate.

This sequence belongs to the PdxS/SNZ family. As to quaternary structure, in the presence of PdxT, forms a dodecamer of heterodimers.

It carries out the reaction aldehydo-D-ribose 5-phosphate + D-glyceraldehyde 3-phosphate + L-glutamine = pyridoxal 5'-phosphate + L-glutamate + phosphate + 3 H2O + H(+). It participates in cofactor biosynthesis; pyridoxal 5'-phosphate biosynthesis. Its function is as follows. Catalyzes the formation of pyridoxal 5'-phosphate from ribose 5-phosphate (RBP), glyceraldehyde 3-phosphate (G3P) and ammonia. The ammonia is provided by the PdxT subunit. Can also use ribulose 5-phosphate and dihydroxyacetone phosphate as substrates, resulting from enzyme-catalyzed isomerization of RBP and G3P, respectively. This is Pyridoxal 5'-phosphate synthase subunit PdxS from Bifidobacterium adolescentis (strain ATCC 15703 / DSM 20083 / NCTC 11814 / E194a).